Here is a 328-residue protein sequence, read N- to C-terminus: uncharacterized protein (328 aa).

The first 32 residues, 1–32 (MFNFRLFSRRGKSLGLLAIVLLLFGFYSLKSS), serve as a signal peptide directing secretion.

Belongs to the glycosyltransferase 34 family.

The protein resides in the endoplasmic reticulum. This is an uncharacterized protein from Schizosaccharomyces pombe (strain 972 / ATCC 24843) (Fission yeast).